The chain runs to 549 residues: Glucose-6-phosphate isomerase (549 aa).

Glu-355 functions as the Proton donor in the catalytic mechanism. Active-site residues include His-387 and Lys-515.

It belongs to the GPI family.

The protein resides in the cytoplasm. The enzyme catalyses alpha-D-glucose 6-phosphate = beta-D-fructose 6-phosphate. It participates in carbohydrate biosynthesis; gluconeogenesis. Its pathway is carbohydrate degradation; glycolysis; D-glyceraldehyde 3-phosphate and glycerone phosphate from D-glucose: step 2/4. Catalyzes the reversible isomerization of glucose-6-phosphate to fructose-6-phosphate. The protein is Glucose-6-phosphate isomerase of Haemophilus influenzae (strain 86-028NP).